A 150-amino-acid polypeptide reads, in one-letter code: Large ribosomal subunit protein bL9 (150 aa).

The protein belongs to the bacterial ribosomal protein bL9 family.

In terms of biological role, binds to the 23S rRNA. The protein is Large ribosomal subunit protein bL9 of Delftia acidovorans (strain DSM 14801 / SPH-1).